The chain runs to 127 residues: uncharacterized protein (127 aa).

The interval 1 to 34 (MKNPESSGVSSSPQIQRVSPSSSSTSPSPPSIGT) is disordered. The segment covering 9–34 (VSSSPQIQRVSPSSSSTSPSPPSIGT) has biased composition (low complexity). The next 2 helical transmembrane spans lie at 47–67 (IAAV…PLAM) and 84–104 (TIAV…YLLV).

It is found in the membrane. This is an uncharacterized protein from Saccharomyces cerevisiae (strain ATCC 204508 / S288c) (Baker's yeast).